A 365-amino-acid polypeptide reads, in one-letter code: Histidinol-phosphate aminotransferase (365 aa).

Lys221 carries the post-translational modification N6-(pyridoxal phosphate)lysine.

Belongs to the class-II pyridoxal-phosphate-dependent aminotransferase family. Histidinol-phosphate aminotransferase subfamily. As to quaternary structure, homodimer. Pyridoxal 5'-phosphate serves as cofactor.

It carries out the reaction L-histidinol phosphate + 2-oxoglutarate = 3-(imidazol-4-yl)-2-oxopropyl phosphate + L-glutamate. Its pathway is amino-acid biosynthesis; L-histidine biosynthesis; L-histidine from 5-phospho-alpha-D-ribose 1-diphosphate: step 7/9. This chain is Histidinol-phosphate aminotransferase, found in Rhodopseudomonas palustris (strain HaA2).